Reading from the N-terminus, the 104-residue chain is U20-lycotoxin-Ls1c (104 aa).

The first 30 residues, 1-30, serve as a signal peptide directing secretion; it reads MFSTSDQVSKMNSRILSALLILGIATCVIA. The WAP domain maps to 31–76; sequence GGFCPKSRHPQCDLSYKINDCCAQSDCRVGSVCCVEGCGNVCRAES. Cystine bridges form between Cys34–Cys64, Cys42–Cys68, Cys51–Cys63, Cys52–Cys90, and Cys57–Cys72.

This sequence belongs to the venom protein 11 family. 02 (wap-2) subfamily. Post-translationally, contains 5 disulfide bonds. In terms of tissue distribution, expressed by the venom gland.

The protein resides in the secreted. In terms of biological role, has antibacterial activity. The sequence is that of U20-lycotoxin-Ls1c from Lycosa singoriensis (Wolf spider).